Here is a 202-residue protein sequence, read N- to C-terminus: MSEILELEAKSRNEFGTGAARALRREGRVPAIIYGAKKTPVSISLEEKEITKYYRKPAFISQLINLTIEGTQYKVLPKAVELHPVTDIVRHVDFVFLEDKTQKMEVPVVYEGKERALGVKRGGYFNIVKRRVTLLCDVNNIPRNVTIDVTNMPIATSLKSSKVKLPEGCSFTTKKEFVLATIIGRRGAKTEAEGEQTAEAAK.

Belongs to the bacterial ribosomal protein bL25 family. CTC subfamily. As to quaternary structure, part of the 50S ribosomal subunit; part of the 5S rRNA/L5/L18/L25 subcomplex. Contacts the 5S rRNA. Binds to the 5S rRNA independently of L5 and L18.

This is one of the proteins that binds to the 5S RNA in the ribosome where it forms part of the central protuberance. The protein is Large ribosomal subunit protein bL25 of Rickettsia bellii (strain OSU 85-389).